A 274-amino-acid chain; its full sequence is Triosephosphate isomerase (274 aa).

31 to 33 (NWK) provides a ligand contact to substrate. Residue His118 is the Electrophile of the active site. Glu188 (proton acceptor) is an active-site residue. Residues Gly194, Ser234, and 255 to 256 (GG) each bind substrate.

This sequence belongs to the triosephosphate isomerase family. Homodimer.

It is found in the cytoplasm. It catalyses the reaction D-glyceraldehyde 3-phosphate = dihydroxyacetone phosphate. It participates in carbohydrate biosynthesis; gluconeogenesis. Its pathway is carbohydrate degradation; glycolysis; D-glyceraldehyde 3-phosphate from glycerone phosphate: step 1/1. Its function is as follows. Involved in the gluconeogenesis. Catalyzes stereospecifically the conversion of dihydroxyacetone phosphate (DHAP) to D-glyceraldehyde-3-phosphate (G3P). This Chlamydia trachomatis serovar L2 (strain ATCC VR-902B / DSM 19102 / 434/Bu) protein is Triosephosphate isomerase.